A 537-amino-acid polypeptide reads, in one-letter code: Asparagine-rich protein (537 aa).

Disordered regions lie at residues 1–22 (YNNN…QNTN), 187–254 (NMNI…NNNF), 336–372 (YNNN…YGYD), 399–479 (LNNN…DDWG), and 509–528 (DLSK…MKKD). Low complexity-rich tracts occupy residues 336–347 (YNNNESNTANPN) and 399–469 (LNNN…NQNN). A compositionally biased stretch (acidic residues) spans 470–479 (NEDEDDDDWG). The segment covering 509-518 (DLSKKGNDGK) has biased composition (basic and acidic residues).

The polypeptide is Asparagine-rich protein (Plasmodium falciparum).